Consider the following 159-residue polypeptide: Ribosomal RNA large subunit methyltransferase H (159 aa).

S-adenosyl-L-methionine contacts are provided by residues Leu76, Gly108, and 127–132 (FSKMTL).

Belongs to the RNA methyltransferase RlmH family. In terms of assembly, homodimer.

The protein resides in the cytoplasm. The enzyme catalyses pseudouridine(1915) in 23S rRNA + S-adenosyl-L-methionine = N(3)-methylpseudouridine(1915) in 23S rRNA + S-adenosyl-L-homocysteine + H(+). In terms of biological role, specifically methylates the pseudouridine at position 1915 (m3Psi1915) in 23S rRNA. This is Ribosomal RNA large subunit methyltransferase H from Bacillus thuringiensis subsp. konkukian (strain 97-27).